The chain runs to 209 residues: Uridine kinase (209 aa).

12 to 19 (GGSGGGKT) is a binding site for ATP.

Belongs to the uridine kinase family.

The protein localises to the cytoplasm. The catalysed reaction is uridine + ATP = UMP + ADP + H(+). It catalyses the reaction cytidine + ATP = CMP + ADP + H(+). Its pathway is pyrimidine metabolism; CTP biosynthesis via salvage pathway; CTP from cytidine: step 1/3. It functions in the pathway pyrimidine metabolism; UMP biosynthesis via salvage pathway; UMP from uridine: step 1/1. The sequence is that of Uridine kinase from Streptococcus agalactiae serotype III (strain NEM316).